Consider the following 224-residue polypeptide: Biosynthetic peptidoglycan transglycosylase (224 aa).

Residues 9 to 29 traverse the membrane as a helical segment; that stretch reads VLILVSFVLLIQLWIFCSLAW.

It belongs to the glycosyltransferase 51 family.

The protein resides in the cell inner membrane. It catalyses the reaction [GlcNAc-(1-&gt;4)-Mur2Ac(oyl-L-Ala-gamma-D-Glu-L-Lys-D-Ala-D-Ala)](n)-di-trans,octa-cis-undecaprenyl diphosphate + beta-D-GlcNAc-(1-&gt;4)-Mur2Ac(oyl-L-Ala-gamma-D-Glu-L-Lys-D-Ala-D-Ala)-di-trans,octa-cis-undecaprenyl diphosphate = [GlcNAc-(1-&gt;4)-Mur2Ac(oyl-L-Ala-gamma-D-Glu-L-Lys-D-Ala-D-Ala)](n+1)-di-trans,octa-cis-undecaprenyl diphosphate + di-trans,octa-cis-undecaprenyl diphosphate + H(+). It participates in cell wall biogenesis; peptidoglycan biosynthesis. Functionally, peptidoglycan polymerase that catalyzes glycan chain elongation from lipid-linked precursors. In Acinetobacter baylyi (strain ATCC 33305 / BD413 / ADP1), this protein is Biosynthetic peptidoglycan transglycosylase.